The chain runs to 560 residues: Triacylglyceride transporter MSMEG_3069/MSMEI_2992 (560 aa).

A run of 14 helical transmembrane segments spans residues 16 to 36 (LAVLLGALDTYVVITIIVDIM), 48 to 68 (QVTPIITGYLLGYIAAMPLLG), 78 to 98 (MLIQVGLAGFAVGSVVTALSS), 108 to 128 (IIQGSASGALLPVTLALAADL), 143 to 163 (AAQELGAVLGPMYGIALVWLF), 168 to 188 (AVFWVNVPLAVIAMVMIHFSL), 200 to 220 (VDVIGGVLLAIALGLTVVGLY), 229 to 249 (VLPSWGLPVLAGALVAAVAFF), 269 to 289 (PFLAALAASLCAGAALMVTLV), 307 to 327 (AFLLLRFLIALPIGALIGGWL), 336 to 356 (VVLIGLLIAAGGFVLISHWSV), 368 to 388 (FTLPVLDTDLAIVGLGLGLVI), 411 to 431 (VVVARMIGMLIGIAALGAWGF), and 477 to 497 (IFLSAAVVCVIGALLGLLISG). Residues 362-371 (RHNLGLFTLP) are beta-hairpin. A disordered region spans residues 519 to 560 (IDPYDAGDADDAPTEMLDLPTQVLSAPPSDPGDERPGRHRAP).

Belongs to the major facilitator superfamily. P55 (TC 2.A.1.3.34) family.

It localises to the cell inner membrane. Its activity is regulated as follows. Resistance to ethidium bromide is inhibited by reserpine. Its function is as follows. In association with lipoprotein LprG transports triacyglycerides (TAG) across the inner cell membrane into the periplasm; TAG probably regulates lipid metabolism and growth regulation and plays a structural role in the outer membrane. TAG (and maybe other lipids) enters the central cavity of the P55 transporter from within the cell inner membrane via clefts on the cytoplasmic face of P55 between TM5-TM8 and TM2-TM11. From there the lipid is probably transferred to the hydrophobic cavity of LprG. Confers resistance to ethidium bromide, possibly acting as an efflux pump, requires LprG lipoprotein for normal function. Export of ethidium bromide can be complemented by the equivalent operon from M.tuberculosis (lprG-Rv1410c). Involved in drug susceptibilty, its expression alone partially complements the antibiotic susceptibilty of a double lprG-mfs deletion. Probably does not function as a bona fide drug efflux pump, but instead plays a role in outer membrane biogenesis. Probably required with LprG for normal surface localization of lipoarabinomannan (LAM). The polypeptide is Triacylglyceride transporter MSMEG_3069/MSMEI_2992 (Mycolicibacterium smegmatis (strain ATCC 700084 / mc(2)155) (Mycobacterium smegmatis)).